The primary structure comprises 176 residues: Interleukin-19 (176 aa).

The signal sequence occupies residues 1-24 (MKTQCASTWLLGMTLILCSVHIYS). Disulfide bonds link cysteine 28-cysteine 120, cysteine 74-cysteine 126, and cysteine 75-cysteine 128. Residue asparagine 56 is glycosylated (N-linked (GlcNAc...) asparagine). 2 N-linked (GlcNAc...) asparagine glycosylation sites follow: asparagine 127 and asparagine 134.

The protein belongs to the IL-10 family.

The protein localises to the secreted. Cytokine that functions as an anti-inflammatory and proangiogenic factor. Polarizes adaptive immunity to an anti-inflammatory phenotype through induction of T-helper 2 responses by both down-regulation of IFN-gamma and up-regulation of IL4 and IL5. Produced by osteocytes, stimulates granulopoiesis and neutrophil formation. Exerts its biological effect through a receptor complex consisting of a heterodimer of IL20RA and IL20RB. In turn, activates the Janus kinase (JAK) and signal transducer and activator of transcription (STAT) pathway, and importantly, STAT3. The protein is Interleukin-19 (Il19) of Mus musculus (Mouse).